The primary structure comprises 868 residues: Homeobox-leucine zipper protein HOX29 (868 aa).

The homeobox DNA-binding region spans 9-72 (DASKYVRYTP…NRRCREKQRK (64 aa)). A coiled-coil region spans residues 64–106 (RRCREKQRKESSRLQALNRKLTAMNKLLMEENDRLQKQVSQLV). The segment at 150–171 (VTSGHHHQQQQHNVVQPPPRDA) is disordered. The region spanning 169-397 (RDASPAGLMS…VAHEDTRSVI (229 aa)) is the START domain.

Belongs to the HD-ZIP homeobox family. Class III subfamily. Expressed in phloem.

The protein resides in the nucleus. Functionally, probable transcription factor that may be necessary for the proper patterning of vascular bundles. The protein is Homeobox-leucine zipper protein HOX29 (HOX29) of Oryza sativa subsp. japonica (Rice).